Here is a 90-residue protein sequence, read N- to C-terminus: U7-theraphotoxin-Hhn1i (90 aa).

An N-terminal signal peptide occupies residues methionine 1–serine 19. Residues phenylalanine 20–glutamate 50 constitute a propeptide that is removed on maturation. Cystine bridges form between cysteine 51/cysteine 65, cysteine 58/cysteine 70, and cysteine 64/cysteine 81.

This sequence belongs to the neurotoxin 10 (Hwtx-1) family. 13 (Hntx-13) subfamily. In terms of tissue distribution, expressed by the venom gland.

The protein resides in the secreted. Ion channel inhibitor. This chain is U7-theraphotoxin-Hhn1i, found in Cyriopagopus hainanus (Chinese bird spider).